The primary structure comprises 57 residues: UPF0391 membrane protein HNE_2348 (57 aa).

Helical transmembrane passes span 4–24 (WALT…GGIA) and 27–47 (AASI…ITFV).

The protein belongs to the UPF0391 family.

It localises to the cell membrane. The sequence is that of UPF0391 membrane protein HNE_2348 from Hyphomonas neptunium (strain ATCC 15444).